A 212-amino-acid chain; its full sequence is Cytidylate kinase (212 aa).

7–15 (GPAASGKGT) contributes to the ATP binding site.

The protein belongs to the cytidylate kinase family. Type 1 subfamily.

It is found in the cytoplasm. It catalyses the reaction CMP + ATP = CDP + ADP. It carries out the reaction dCMP + ATP = dCDP + ADP. This is Cytidylate kinase from Rhodopseudomonas palustris (strain HaA2).